The following is a 457-amino-acid chain: Siroheme synthase (457 aa).

The interval 1–204 is precorrin-2 dehydrogenase /sirohydrochlorin ferrochelatase; that stretch reads MDHLPIFCQL…NDQKAITETT (204 aa). Residues 22-23 and 43-44 each bind NAD(+); these read DV and LA. Serine 128 bears the Phosphoserine mark. Residues 216-457 are uroporphyrinogen-III C-methyltransferase; sequence GEVVLVGAGP…RDKLNWFSNH (242 aa). An S-adenosyl-L-methionine-binding site is contributed by proline 225. Residue aspartate 248 is the Proton acceptor of the active site. Residue lysine 270 is the Proton donor of the active site. S-adenosyl-L-methionine contacts are provided by residues 301–303, isoleucine 306, 331–332, methionine 382, and glycine 411; these read GGD and TA.

This sequence in the N-terminal section; belongs to the precorrin-2 dehydrogenase / sirohydrochlorin ferrochelatase family. In the C-terminal section; belongs to the precorrin methyltransferase family.

The catalysed reaction is uroporphyrinogen III + 2 S-adenosyl-L-methionine = precorrin-2 + 2 S-adenosyl-L-homocysteine + H(+). It carries out the reaction precorrin-2 + NAD(+) = sirohydrochlorin + NADH + 2 H(+). The enzyme catalyses siroheme + 2 H(+) = sirohydrochlorin + Fe(2+). It functions in the pathway cofactor biosynthesis; adenosylcobalamin biosynthesis; precorrin-2 from uroporphyrinogen III: step 1/1. It participates in cofactor biosynthesis; adenosylcobalamin biosynthesis; sirohydrochlorin from precorrin-2: step 1/1. Its pathway is porphyrin-containing compound metabolism; siroheme biosynthesis; precorrin-2 from uroporphyrinogen III: step 1/1. The protein operates within porphyrin-containing compound metabolism; siroheme biosynthesis; siroheme from sirohydrochlorin: step 1/1. It functions in the pathway porphyrin-containing compound metabolism; siroheme biosynthesis; sirohydrochlorin from precorrin-2: step 1/1. In terms of biological role, multifunctional enzyme that catalyzes the SAM-dependent methylations of uroporphyrinogen III at position C-2 and C-7 to form precorrin-2 via precorrin-1. Then it catalyzes the NAD-dependent ring dehydrogenation of precorrin-2 to yield sirohydrochlorin. Finally, it catalyzes the ferrochelation of sirohydrochlorin to yield siroheme. The sequence is that of Siroheme synthase from Escherichia coli O6:H1 (strain CFT073 / ATCC 700928 / UPEC).